Consider the following 314-residue polypeptide: Large ribosomal subunit protein uL10 (314 aa).

Positions 285–314 (GAAAGGAAAEEEKEEEEESDEEGGFGDLFG) are disordered. A compositionally biased stretch (acidic residues) spans 293 to 308 (AEEEKEEEEESDEEGG). Serine 303 is subject to Phosphoserine; by CK1.

Belongs to the universal ribosomal protein uL10 family. Component of the large ribosomal subunit. P0 forms a pentameric complex by interaction with dimers of P1 and P2. Phosphorylated.

Functionally, ribosomal protein P0 is the functional equivalent of E.coli protein L10. This is Large ribosomal subunit protein uL10 from Podospora anserina (Pleurage anserina).